Reading from the N-terminus, the 147-residue chain is Protein archease (147 aa).

Ca(2+) is bound by residues D17, D146, and V147.

Belongs to the archease family.

Activates the tRNA-splicing ligase complex by facilitating the enzymatic turnover of catalytic subunit RtcB. Acts by promoting the guanylylation of RtcB, a key intermediate step in tRNA ligation. Can also alter the NTP specificity of RtcB such that ATP, dGTP or ITP is used efficiently. The sequence is that of Protein archease from Pyrobaculum islandicum (strain DSM 4184 / JCM 9189 / GEO3).